The primary structure comprises 358 residues: Aminomethyltransferase (358 aa).

This sequence belongs to the GcvT family. The glycine cleavage system is composed of four proteins: P, T, L and H.

It carries out the reaction N(6)-[(R)-S(8)-aminomethyldihydrolipoyl]-L-lysyl-[protein] + (6S)-5,6,7,8-tetrahydrofolate = N(6)-[(R)-dihydrolipoyl]-L-lysyl-[protein] + (6R)-5,10-methylene-5,6,7,8-tetrahydrofolate + NH4(+). In terms of biological role, the glycine cleavage system catalyzes the degradation of glycine. This Francisella tularensis subsp. tularensis (strain WY96-3418) protein is Aminomethyltransferase.